A 194-amino-acid polypeptide reads, in one-letter code: Transcriptional repressor NrdR (194 aa).

The segment at 3–33 (CPFCGHADDRVLDTRVQKDGSIRRRRECLEC) is a zinc-finger region. An ATP-cone domain is found at 48-138 (PFIIKKDGRR…VYRTFKDVQE (91 aa)). The segment covering 168 to 179 (ESEKSTNHETDS) has biased composition (basic and acidic residues). A disordered region spans residues 168-194 (ESEKSTNHETDSKTPSPRTRPPGPLSN). Pro residues predominate over residues 185-194 (RTRPPGPLSN).

This sequence belongs to the NrdR family. Zn(2+) is required as a cofactor.

Functionally, negatively regulates transcription of bacterial ribonucleotide reductase nrd genes and operons by binding to NrdR-boxes. The chain is Transcriptional repressor NrdR from Bdellovibrio bacteriovorus (strain ATCC 15356 / DSM 50701 / NCIMB 9529 / HD100).